The primary structure comprises 413 residues: Na(+)/H(+) antiporter NhaA (413 aa).

The next 11 helical transmembrane spans lie at 15 to 35, 57 to 77, 93 to 113, 123 to 143, 152 to 172, 175 to 195, 211 to 231, 261 to 281, 295 to 315, 333 to 353, and 364 to 384; these read LESGAAGGLLLMACAVLALFV, LLHWINDGLMAIFFLFVGLEI, ALPCIAAAGGVVVPGLIYASL, GWAIPTATDIAFALGVLSLLG, IFLATLAIVDDLVAVLIIAVF, AELNTAALMGAALVTLVLLGF, VALWWLVLLSGVHATIAGVVL, WVAFLVVPIFGFANAGLSFAG, VALGLFFGKQIGVFGAAWLAI, GVSLLCGIGFTMSLFIGLLAF, and VGVLVGSLSSALIGATLLSLT.

The protein belongs to the NhaA Na(+)/H(+) (TC 2.A.33) antiporter family.

The protein localises to the cell inner membrane. It carries out the reaction Na(+)(in) + 2 H(+)(out) = Na(+)(out) + 2 H(+)(in). Its function is as follows. Na(+)/H(+) antiporter that extrudes sodium in exchange for external protons. The sequence is that of Na(+)/H(+) antiporter NhaA from Caulobacter vibrioides (strain ATCC 19089 / CIP 103742 / CB 15) (Caulobacter crescentus).